A 104-amino-acid polypeptide reads, in one-letter code: UPF0145 protein HCH_01985 (104 aa).

It belongs to the UPF0145 family.

This Hahella chejuensis (strain KCTC 2396) protein is UPF0145 protein HCH_01985.